The primary structure comprises 160 residues: Transcription antitermination protein NusB (160 aa).

The protein belongs to the NusB family.

In terms of biological role, involved in transcription antitermination. Required for transcription of ribosomal RNA (rRNA) genes. Binds specifically to the boxA antiterminator sequence of the ribosomal RNA (rrn) operons. The protein is Transcription antitermination protein NusB of Gluconobacter oxydans (strain 621H) (Gluconobacter suboxydans).